Here is an 859-residue protein sequence, read N- to C-terminus: Transforming growth factor-beta receptor-associated protein 1 (859 aa).

The region spanning 24 to 297 (RGLLECVECC…HILQDFEGRV (274 aa)) is the CNH domain. Residues 563-727 (KRPLDEQQSG…LLAVYLGPGP (165 aa)) form a CHCR repeat.

The protein belongs to the TRAP1 family. As to quaternary structure, interacts with TGFBR2 and ACVR2B; in the absence of ligand stimulation. Interacts with TGFBR1, ACVRL1, BMPR1A and ACVR1B; in the absence of ligand stimulation and to a less extent. Interacts with SMAD4; the interaction seems to be mutually exclusive with the interaction of SMAD4 and phosphorylated SMAD2. May interact with ALOX5. Interacts with RAB5C. Interacts with VPS8, VPS11 and VPS16. Component of the putative class C core vacuole/endosome tethering (CORVET) complex; the core of which composed of the class C Vps proteins VPS11, VPS16, VPS18 and VPS33A, is associated with VPS8 and TGFBRAP1.

The protein localises to the cytoplasm. It localises to the early endosome. Functionally, plays a role in the TGF-beta/activin signaling pathway. It associates with inactive heteromeric TGF-beta and activin receptor complexes, mainly through the type II receptor, and is released upon activation of signaling. May recruit SMAD4 to the vicinity of the receptor complex and facilitate its interaction with receptor-regulated Smads, such as SMAD2. Plays a role in vesicle-mediated protein trafficking of the endocytic membrane transport pathway. Believed to act as a component of the putative CORVET endosomal tethering complexes which is proposed to be involved in the Rab5-to-Rab7 endosome conversion probably implicating MON1A/B, and via binding SNAREs and SNARE complexes to mediate tethering and docking events during SNARE-mediated membrane fusion. The CORVET complex is proposed to function as a Rab5 effector to mediate early endosome fusion probably in specific endosome subpopulations. Functions predominantly in APPL1-containing endosomes and in degradative but not recycling trafficking of endocytosed cargo. The polypeptide is Transforming growth factor-beta receptor-associated protein 1 (TGFBRAP1) (Bos taurus (Bovine)).